Reading from the N-terminus, the 323-residue chain is Aquaporin-4 (323 aa).

Residues 1–36 (MSDRPTARRWGKCGPLCTRENIMVAFKGVWTQAFWK) lie on the Cytoplasmic side of the membrane. Residues cysteine 13 and cysteine 17 are each lipidated (S-palmitoyl cysteine). The helical transmembrane segment at 37–57 (AVTAEFLAMLIFVLLSLGSTI) threads the bilayer. The Extracellular segment spans residues 58–69 (NWGGTEKPLPVD). A helical membrane pass occupies residues 70–89 (MVLISLCFGLSIATMVQCFG). Residues 90-93 (HISG) are Cytoplasmic-facing. Residues 94 to 101 (GHINPAVT) constitute an intramembrane region (discontinuously helical). Positions 97–99 (NPA) match the NPA 1 motif. At 102–115 (VAMVCTRKISIAKS) the chain is on the cytoplasmic side. Serine 111 carries the post-translational modification Phosphoserine; by PKG. Residues 116–136 (VFYIAAQCLGAIIGAGILYLV) form a helical membrane-spanning segment. Residues 137–155 (TPPSVVGGLGVTMVHGNLT) are Extracellular-facing. The N-linked (GlcNAc...) asparagine glycan is linked to asparagine 153. Residues 156–176 (AGHGLLVELIITFQLVFTIFA) traverse the membrane as a helical segment. Topologically, residues 177-184 (SCDSKRTD) are cytoplasmic. A Phosphoserine; by PKC modification is found at serine 180. Residues 185-205 (VTGSIALAIGFSVAIGHLFAI) traverse the membrane as a helical segment. A glycan (N-linked (GlcNAc...) asparagine) is linked at asparagine 206. Residues 206–208 (NYT) lie on the Extracellular side of the membrane. Positions 209–222 (GASMNPARSFGPAV) form an intramembrane region, discontinuously helical. An NPA 2 motif is present at residues 213 to 215 (NPA). Residues 223–231 (IMGNWENHW) lie on the Extracellular side of the membrane. Residues 232–252 (IYWVGPIIGAVLAGGLYEYVF) traverse the membrane as a helical segment. Residues 253 to 323 (CPDVEFKRRF…DQSGEVLSSV (71 aa)) lie on the Cytoplasmic side of the membrane. Phosphoserine occurs at positions 276 and 285. A Phosphothreonine modification is found at threonine 289. The residue at position 321 (serine 321) is a Phosphoserine.

The protein belongs to the MIP/aquaporin (TC 1.A.8) family. In terms of assembly, homotetramer. The tetramers can form oligomeric arrays in membranes. The size of the oligomers differs between tissues and is smaller in skeletal muscle than in brain. Interaction between AQP4 oligomeric arrays in close-by cells can contribute to cell-cell adhesion. Part of a complex containing MLC1, TRPV4, HEPACAM and ATP1B1. Post-translationally, phosphorylation by PKC at Ser-180 reduces conductance by 50%. Phosphorylation by PKG at Ser-111 in response to glutamate increases conductance by 40%. Isoform 2: Palmitoylated on its N-terminal region. Isoform 1: Not palmitoylated. As to expression, detected in skeletal muscle. Detected in stomach, along the glandular base region of the fundic gland (at protein level). Detected in brain, lung and skeletal muscle, and at much lower levels in heart and ovary.

Its subcellular location is the cell membrane. The protein resides in the basolateral cell membrane. It localises to the endosome membrane. The protein localises to the sarcolemma. It is found in the cell projection. The enzyme catalyses H2O(in) = H2O(out). Its function is as follows. Forms a water-specific channel. Plays an important role in brain water homeostasis. It is involved in glymphatic solute transport and is required for a normal rate of water exchange across the blood brain interface. Required for normal levels of cerebrospinal fluid influx into the brain cortex and parenchyma along paravascular spaces that surround penetrating arteries, and for normal drainage of interstitial fluid along paravenous drainage pathways. Thereby, it is required for normal clearance of solutes from the brain interstitial fluid, including soluble beta-amyloid peptides derived from APP. Plays a redundant role in urinary water homeostasis and urinary concentrating ability. The polypeptide is Aquaporin-4 (AQP4) (Homo sapiens (Human)).